The chain runs to 112 residues: Nucleoid-associated protein lpp2803 (112 aa).

It belongs to the YbaB/EbfC family. Homodimer.

The protein resides in the cytoplasm. The protein localises to the nucleoid. Its function is as follows. Binds to DNA and alters its conformation. May be involved in regulation of gene expression, nucleoid organization and DNA protection. In Legionella pneumophila (strain Paris), this protein is Nucleoid-associated protein lpp2803.